Reading from the N-terminus, the 555-residue chain is Alpha-1,2-mannosyltransferase ALG9 (555 aa).

The Cytoplasmic portion of the chain corresponds to 1–7 (MNCKAVT). Residues 8-28 (ISLLLLLFLTRVYIQPTFSLI) form a helical membrane-spanning segment. The Lumenal portion of the chain corresponds to 29-62 (SDCDETFNYWEPLNLLVRGFGKQTWEYSPEYSIR). A helical membrane pass occupies residues 63–83 (SWAFLLPFYCILYPVNKFTDL). At 84–86 (ESH) the chain is on the cytoplasmic side. The chain crosses the membrane as a helical span at residues 87–107 (WNFFITRACLGFFSFIMEFKL). The Lumenal segment spans residues 108-113 (HREIAG). The helical transmembrane segment at 114–134 (SLALQIANIWIIFQLFNPGWF) threads the bilayer. Residues 135-176 (HASVELLPSAVAMLLYVGATRHSLRYLSTGSTSNFTKSLAYN) lie on the Cytoplasmic side of the membrane. Residues 177-197 (FLASILGWPFVLILSLPLCLH) form a helical membrane-spanning segment. The Lumenal portion of the chain corresponds to 198 to 213 (YLFNHRIISTIRTAFD). Residues 214–234 (CCLIFSLTAFAVIVTDSIFYG) form a helical membrane-spanning segment. Over 235-268 (KLAPVSWNILFYNVINASEESGPNIFGVEPWYYY) the chain is Cytoplasmic. A helical transmembrane segment spans residues 269 to 289 (PLNLLLNFPLPVLVLAILGIF). Topologically, residues 290-316 (HLRLWPLWASLFTWIAVFTQQPHKEER) are lumenal. Residues 317 to 337 (FLYPIYGLITLSASIAFYKVL) traverse the membrane as a helical segment. At 338-349 (NLFNRKPILKKG) the chain is on the cytoplasmic side. The helical transmembrane segment at 350–370 (IKLSVLLIVAGQAMSRIVALV) threads the bilayer. Over 371–555 (NNYTAPIAVY…LFEKPTETTN (185 aa)) the chain is Lumenal.

It belongs to the glycosyltransferase 22 family.

It is found in the endoplasmic reticulum membrane. It catalyses the reaction an alpha-D-Man-(1-&gt;2)-alpha-D-Man-(1-&gt;2)-alpha-D-Man-(1-&gt;3)-[alpha-D-Man-(1-&gt;3)-alpha-D-Man-(1-&gt;6)]-beta-D-Man-(1-&gt;4)-beta-D-GlcNAc-(1-&gt;4)-alpha-D-GlcNAc-diphospho-di-trans,poly-cis-dolichol + a di-trans,poly-cis-dolichyl beta-D-mannosyl phosphate = an alpha-D-Man-(1-&gt;2)-alpha-D-Man-(1-&gt;2)-alpha-D-Man-(1-&gt;3)-[alpha-D-Man-(1-&gt;2)-alpha-D-Man-(1-&gt;3)-alpha-D-Man-(1-&gt;6)]-beta-D-Man-(1-&gt;4)-beta-D-GlcNAc-(1-&gt;4)-alpha-D-GlcNAc-diphospho-di-trans,poly-cis-dolichol + a di-trans,poly-cis-dolichyl phosphate + H(+). It carries out the reaction an alpha-D-Man-(1-&gt;2)-alpha-D-Man-(1-&gt;2)-alpha-D-Man-(1-&gt;3)-[alpha-D-Man-(1-&gt;2)-alpha-D-Man-(1-&gt;3)-[alpha-D-Man-(1-&gt;6)]-alpha-D-Man-(1-&gt;6)]-beta-D-Man-(1-&gt;4)-beta-D-GlcNAc-(1-&gt;4)-alpha-D-GlcNAc-diphospho-di-trans,poly-cis-dolichol + a di-trans,poly-cis-dolichyl beta-D-mannosyl phosphate = an alpha-D-Man-(1-&gt;2)-alpha-D-Man-(1-&gt;2)-alpha-D-Man-(1-&gt;3)-[alpha-D-Man-(1-&gt;2)-alpha-D-Man-(1-&gt;3)-[alpha-D-Man-(1-&gt;2)-alpha-D-Man-(1-&gt;6)]-alpha-D-Man-(1-&gt;6)]-beta-D-Man-(1-&gt;4)-beta-D-GlcNAc-(1-&gt;4)-alpha-D-GlcNAc-diphospho-di-trans,poly-cis-dolichol + a di-trans,poly-cis-dolichyl phosphate + H(+). It functions in the pathway protein modification; protein glycosylation. In terms of biological role, mannosyltransferase that operates in the biosynthetic pathway of dolichol-linked oligosaccharides, the glycan precursors employed in protein asparagine (N)-glycosylation. The assembly of dolichol-linked oligosaccharides begins on the cytosolic side of the endoplasmic reticulum membrane and finishes in its lumen. The sequential addition of sugars to dolichol pyrophosphate produces dolichol-linked oligosaccharides containing fourteen sugars, including two GlcNAcs, nine mannoses and three glucoses. Once assembled, the oligosaccharide is transferred from the lipid to nascent proteins by oligosaccharyltransferases. In the lumen of the endoplasmic reticulum, catalyzes the addition of the seventh and ninth alpha-1,2-linked mannose residues to Man(6)GlcNAc(2)-PP-dolichol and Man(8)GlcNAc(2)-PP-dolichol respectively. The polypeptide is Alpha-1,2-mannosyltransferase ALG9 (ALG9) (Saccharomyces cerevisiae (strain ATCC 204508 / S288c) (Baker's yeast)).